We begin with the raw amino-acid sequence, 347 residues long: Fructose-1,6-bisphosphatase (347 aa).

AMP-binding positions include 19-23 (ILQEQ) and 44-48 (SGELS). Aspartate 85 and glutamate 114 together coordinate Mg(2+). 127–128 (SY) is an AMP binding site. Mg(2+) contacts are provided by aspartate 133, isoleucine 135, and aspartate 136. A substrate-binding site is contributed by 136–139 (DGSS). Residue lysine 155 participates in AMP binding. Residues 227–230 (NEGY), 258–263 (RYIGSM), tyrosine 279, and 288–290 (KLR) contribute to the substrate site. A Mg(2+)-binding site is contributed by glutamate 294.

This sequence belongs to the FBPase class 1 family. As to quaternary structure, homotetramer. The cofactor is Mg(2+).

It carries out the reaction beta-D-fructose 1,6-bisphosphate + H2O = beta-D-fructose 6-phosphate + phosphate. The protein operates within carbohydrate biosynthesis; gluconeogenesis. With respect to regulation, subject to complex allosteric regulation. The enzyme can assume an active R-state, or an inactive T-state. Intermediate conformations may exist. AMP acts as allosteric inhibitor. AMP binding affects the turnover of bound substrate and not the affinity for substrate. The protein is Fructose-1,6-bisphosphatase (fbp1) of Schizosaccharomyces pombe (strain 972 / ATCC 24843) (Fission yeast).